The primary structure comprises 405 residues: Tyrosine--tRNA ligase (405 aa).

Residue Tyr-35 coordinates L-tyrosine. Positions 40 to 49 (ATSSSLHIGH) match the 'HIGH' region motif. Residues Tyr-166 and Gln-170 each coordinate L-tyrosine. The 'KMSKS' region motif lies at 226–230 (KMGKS). Residue Lys-229 coordinates ATP. The S4 RNA-binding domain maps to 340–404 (VLLINLMLDS…VGKKKFLRIV (65 aa)).

Belongs to the class-I aminoacyl-tRNA synthetase family. TyrS type 1 subfamily. Homodimer.

The protein localises to the cytoplasm. It carries out the reaction tRNA(Tyr) + L-tyrosine + ATP = L-tyrosyl-tRNA(Tyr) + AMP + diphosphate + H(+). In terms of biological role, catalyzes the attachment of tyrosine to tRNA(Tyr) in a two-step reaction: tyrosine is first activated by ATP to form Tyr-AMP and then transferred to the acceptor end of tRNA(Tyr). The chain is Tyrosine--tRNA ligase from Borreliella afzelii (strain PKo) (Borrelia afzelii).